Here is a 318-residue protein sequence, read N- to C-terminus: Protein W (318 aa).

2 disordered regions span residues 1–23 (MDQD…GGRE) and 38–318 (SEPT…KKGA). The segment covering 7–20 (ILKEDSEVEREAPG) has biased composition (basic and acidic residues). A compositionally biased stretch (polar residues) spans 50 to 59 (LHNTINTPQG). S68 is subject to Phosphoserine; by host. Residues 83-101 (RSGEESRVSGRTSKPEAEA) show a composition bias toward basic and acidic residues. S125 carries the post-translational modification Phosphoserine; by host. Residues 150-168 (GIEDENREMAAHPDKRGED) show a composition bias toward basic and acidic residues. The span at 191–206 (ASNNGRSMEPGSSHSA) shows a compositional bias: polar residues. Phosphoserine; by host is present on residues S192, S249, S257, and S260.

In Sendai virus (strain Fushimi) (SeV), this protein is Protein W (P/V/C).